The chain runs to 266 residues: Proteasome subunit beta type-7 (266 aa).

The propeptide at 1 to 34 (MENLNRGGFDFDLCNRNNVLEKTGLRMKGFMKTG) is removed in mature form. The active-site Nucleophile is the T35.

The protein belongs to the peptidase T1B family. In terms of assembly, the 26S proteasome consists of a 20S proteasome core and two 19S regulatory subunits. The 20S proteasome core is composed of 28 subunits that are arranged in four stacked rings, resulting in a barrel-shaped structure. The two end rings are each formed by seven alpha subunits, and the two central rings are each formed by seven beta subunits. The catalytic chamber with the active sites is on the inside of the barrel.

The protein resides in the cytoplasm. It is found in the nucleus. It carries out the reaction Cleavage of peptide bonds with very broad specificity.. The proteasome is a multicatalytic proteinase complex which is characterized by its ability to cleave peptides with Arg, Phe, Tyr, Leu, and Glu adjacent to the leaving group at neutral or slightly basic pH. The proteasome has an ATP-dependent proteolytic activity. This Dictyostelium discoideum (Social amoeba) protein is Proteasome subunit beta type-7 (psmB7).